Consider the following 386-residue polypeptide: Eukaryotic translation initiation factor 3 subunit M (386 aa).

The region spanning 181–343 is the PCI domain; the sequence is NSELASKVMI…RKVHISSTMH (163 aa).

The protein belongs to the eIF-3 subunit M family. Component of the eukaryotic translation initiation factor 3 (eIF-3) complex.

It is found in the cytoplasm. Its function is as follows. Component of the eukaryotic translation initiation factor 3 (eIF-3) complex, which is involved in protein synthesis of a specialized repertoire of mRNAs and, together with other initiation factors, stimulates binding of mRNA and methionyl-tRNAi to the 40S ribosome. The eIF-3 complex specifically targets and initiates translation of a subset of mRNAs involved in cell proliferation. The protein is Eukaryotic translation initiation factor 3 subunit M of Culex quinquefasciatus (Southern house mosquito).